The chain runs to 29 residues: Galanin (29 aa).

The residue at position 29 (A29) is an Alanine amide.

Belongs to the galanin family.

Its subcellular location is the secreted. Functionally, contracts smooth muscle of the gastrointestinal and genitourinary tract, regulates growth hormone release, modulates insulin release, and may be involved in the control of adrenal secretion. The sequence is that of Galanin (gal) from Amia calva (Bowfin).